The chain runs to 210 residues: Guanylate kinase (210 aa).

Positions 6–186 (GVILVLSSPS…TADRISNILR (181 aa)) constitute a Guanylate kinase-like domain. An ATP-binding site is contributed by 13–20 (SPSGCGKT).

It belongs to the guanylate kinase family.

It localises to the cytoplasm. The catalysed reaction is GMP + ATP = GDP + ADP. Its function is as follows. Essential for recycling GMP and indirectly, cGMP. This chain is Guanylate kinase, found in Anaplasma phagocytophilum (strain HZ).